Consider the following 2724-residue polypeptide: Eukaryotic translation initiation factor 2-alpha kinase 2 (2724 aa).

The Cytoplasmic portion of the chain corresponds to 1–24 (MLNMVDQKKGINNGSSTGVINNIN). A helical membrane pass occupies residues 25–45 (GKIKNEFIFMYLIAAGGFSCV). At 46–673 (YKIKKKKSNK…KFYIKRHNQK (628 aa)) the chain is on the extracellular side. A disordered region spans residues 112-153 (KRERRGRRKEQQREQMGDKRREKRQQQRREKRKEQNTNTKKR). Residues 120-146 (KEQQREQMGDKRREKRQQQRREKRKEQ) are compositionally biased toward basic and acidic residues. A helical transmembrane segment spans residues 674-694 (TYFFENIIFYHYIIMLFLDIE). Residues 695–718 (KYKNKFVSLFQYNLYRKLLKISKR) are Cytoplasmic-facing. A helical membrane pass occupies residues 719–739 (IVLMLHRIETNVICIFLLKHF). Topologically, residues 740–800 (EDYFIRKGIH…KKNIFNFFIE (61 aa)) are extracellular. The chain crosses the membrane as a helical span at residues 801–821 (LFLNNIQINIFKKFEILYLII). Over 822–832 (YFYNYFEKSKQ) the chain is Cytoplasmic. The chain crosses the membrane as a helical span at residues 833 to 853 (FDIEGIGDIIYVWLSLINLFY). Topologically, residues 854 to 876 (DDKGKCIKILSKIFAKLNKKLYY) are extracellular. A helical membrane pass occupies residues 877 to 897 (VYWGKLYIIMNWTTIVDTIFI). Residues 898–908 (RNVLSINREGN) are Cytoplasmic-facing. The chain crosses the membrane as a helical span at residues 909-929 (YYWVIIVLKMINYFVNVAYTL). Residues 930 to 996 (TRMDIFFIKV…KKNYDIYTKY (67 aa)) lie on the Extracellular side of the membrane. A helical membrane pass occupies residues 997-1017 (AILFIYCFIIQAYYFDTLFNI). Residues 1018–2724 (RSLESNEIAN…GDIFLPDKCP (1707 aa)) are Cytoplasmic-facing. Lysine 2029 serves as a coordination point for ATP. In terms of domain architecture, Protein kinase spans 2084–2719 (KHYFTKCGIL…KIISAGDIFL (636 aa)). Residues 2120–2155 (INTLNEENQNMFCKNKEKKEENYKKIDTNISQFSEK) adopt a coiled-coil conformation. The active-site Proton acceptor is aspartate 2229. The interval 2479 to 2507 (EKMDKNKIAAQKKKKKKENKHPIGRRSTN) is disordered. Positions 2488–2502 (AQKKKKKKENKHPIG) are enriched in basic residues.

Belongs to the protein kinase superfamily. Ser/Thr protein kinase family. GCN2 subfamily. Auto-phosphorylated.

The protein localises to the membrane. The enzyme catalyses L-seryl-[protein] + ATP = O-phospho-L-seryl-[protein] + ADP + H(+). The catalysed reaction is L-threonyl-[protein] + ATP = O-phospho-L-threonyl-[protein] + ADP + H(+). Functionally, phosphorylates translation factor eIF2alpha in salivary gland sporozoites during dormancy, which leads to an inhibition of protein translation and accumulation of stalled mRNAs into granules. The polypeptide is Eukaryotic translation initiation factor 2-alpha kinase 2 (Plasmodium berghei (strain Anka)).